A 353-amino-acid polypeptide reads, in one-letter code: Protein-glutamate methylesterase/protein-glutamine glutaminase (353 aa).

Residues 6–123 enclose the Response regulatory domain; sequence RVLVIDDSAL…ARGLKAMLSE (118 aa). Asp57 is subject to 4-aspartylphosphate. One can recognise a CheB-type methylesterase domain in the interval 159–351; it reads AESTDKVIAI…PRIVDLLSER (193 aa). Residues Ser171, His197, and Asp293 contribute to the active site.

The protein belongs to the CheB family. Post-translationally, phosphorylated by CheA. Phosphorylation of the N-terminal regulatory domain activates the methylesterase activity.

It is found in the cytoplasm. The catalysed reaction is [protein]-L-glutamate 5-O-methyl ester + H2O = L-glutamyl-[protein] + methanol + H(+). The enzyme catalyses L-glutaminyl-[protein] + H2O = L-glutamyl-[protein] + NH4(+). Involved in chemotaxis. Part of a chemotaxis signal transduction system that modulates chemotaxis in response to various stimuli. Catalyzes the demethylation of specific methylglutamate residues introduced into the chemoreceptors (methyl-accepting chemotaxis proteins or MCP) by CheR. Also mediates the irreversible deamidation of specific glutamine residues to glutamic acid. This is Protein-glutamate methylesterase/protein-glutamine glutaminase from Syntrophotalea carbinolica (strain DSM 2380 / NBRC 103641 / GraBd1) (Pelobacter carbinolicus).